The chain runs to 365 residues: Medium chain reductase pydE (365 aa).

Residues 21 to 362 form the Enoyl reductase (ER) domain; that stretch reads KLIDSLPVPP…SKRARGKVLI (342 aa). Residues 185-188, Tyr-226, 274-275, and 354-355 each bind NADP(+); these read SGSV, IG, and KR.

This sequence belongs to the zinc-containing alcohol dehydrogenase family. As to quaternary structure, monomer.

It participates in mycotoxin biosynthesis. In terms of biological role, medium chain reductase; part of the gene cluster that mediates the biosynthesis of pyrrocidines, fungal natural products containing a macrocyclic para-cyclophane connected to a decahydrofluorene ring system that show potent antibiotic activities toward Gram-negative bacteria. Within the pathway, pydE functions synergistically with pydB, pydX and pydZ to form the cyclophane. The pathway begins with the PKS-NRPS pydA which, with the help of the trans-enoyl reductase pydC, synthesizes the polyketide-tyrosyl acyl thioester product which can be reductively off-loaded by the terminal reductase (R) domain in pydA. The alpha/beta hydrolase pydG is then required to catalyze the subsequent Knoevenagel condensation that affords the 3-pyrrolin-2-one ring, whereas the four proteins pydB, pydE, pydX and pydZ then function synergistically to form the cyclophane. PydB and the membrane-bound pydX and pydZ are lipid-binding proteins that can sequester and mold the pdyG product into the inverse S-shape. Binding of the medium chain reductase pydE to the complex would trigger the cascade oxidative cyclization. PydY is involved in the Diels-Alder cycloaddition that forms the decahydrofluorene core. Additional non-enzymatic hydroxylation yields pyrrocidine A2 which can be further reduced into pyrrocidine B by an endogenous reductase. The protein is Medium chain reductase pydE of Acremonium sp.